The sequence spans 357 residues: MAGNSIGQYFKVTTFGESHGPAIGGIIDGVPPGLSLNAQDIQFDLNRRRPGTSRYTSPRSEPDIVEILSGVFNEKTTGTSIGLIIKNIDQRSQDYEEIKNLYRPGHADYTYEKKYGLRDYRGGGRSSARETAIRVAAGAIAKKYLYKINKINIRAYLKQIGHIHCDFKDWIYVNNNPFFCPNPEQITELDLFIRNLKKLGNSVGAKVTIIAENLPIGLGEPVFDRLDADLAHALMSINAVKGIEIGDGFSAITKLGSEYRDEITSQGFQSNHSGGILGGISTGQPIIMHIAIKPTSSIKIPGKTVTNHNQETQIITTGRHDPCIGIRIIPIAEAMVAIILMDHILRFRAQCGDRKII.

Positions 48 and 54 each coordinate NADP(+). Residues 125–127, 238–239, G278, 293–297, and R319 contribute to the FMN site; these read RSS, NA, and KPTSS.

The protein belongs to the chorismate synthase family. In terms of assembly, homotetramer. FMNH2 serves as cofactor.

It carries out the reaction 5-O-(1-carboxyvinyl)-3-phosphoshikimate = chorismate + phosphate. It participates in metabolic intermediate biosynthesis; chorismate biosynthesis; chorismate from D-erythrose 4-phosphate and phosphoenolpyruvate: step 7/7. Its function is as follows. Catalyzes the anti-1,4-elimination of the C-3 phosphate and the C-6 proR hydrogen from 5-enolpyruvylshikimate-3-phosphate (EPSP) to yield chorismate, which is the branch point compound that serves as the starting substrate for the three terminal pathways of aromatic amino acid biosynthesis. This reaction introduces a second double bond into the aromatic ring system. This chain is Chorismate synthase, found in Blochmanniella floridana.